A 196-amino-acid chain; its full sequence is UMP-CMP kinase (196 aa).

13–18 is an ATP binding site; that stretch reads GAGKGT. Position 33 is a phosphoserine (serine 33). Residues 33–63 are NMP; it reads SAGELLRDERKNPDSQYGELIEKYIKEGKIV. Arginine 39 is an a ribonucleoside 5'-phosphate binding site. N6-acetyllysine occurs at positions 43 and 55. An a ribonucleoside 5'-phosphate-binding site is contributed by 61 to 63; sequence KIV. A Glycyl lysine isopeptide (Lys-Gly) (interchain with G-Cter in SUMO2) cross-link involves residue lysine 73. Residue 93-96 coordinates a ribonucleoside 5'-phosphate; it reads GFPR. Asparagine 100 serves as a coordination point for CMP. Position 106 is an N6-succinyllysine (lysine 106). Residues 133 to 143 are LID; it reads ERGKSSGRSDD. Residue arginine 134 coordinates ATP. A ribonucleoside 5'-phosphate contacts are provided by arginine 140 and arginine 151. Lysine 179 contributes to the ATP binding site. The residue at position 180 (serine 180) is a Phosphoserine.

Belongs to the adenylate kinase family. UMP-CMP kinase subfamily. In terms of assembly, monomer. Mg(2+) serves as cofactor. As to expression, ubiquitously expressed.

The protein resides in the nucleus. It localises to the cytoplasm. It carries out the reaction CMP + ATP = CDP + ADP. It catalyses the reaction dCMP + ATP = dCDP + ADP. The catalysed reaction is UMP + ATP = UDP + ADP. The enzyme catalyses a 2'-deoxyribonucleoside 5'-diphosphate + ATP = a 2'-deoxyribonucleoside 5'-triphosphate + ADP. It carries out the reaction a ribonucleoside 5'-diphosphate + ATP = a ribonucleoside 5'-triphosphate + ADP. In terms of biological role, catalyzes the phosphorylation of pyrimidine nucleoside monophosphates at the expense of ATP. Plays an important role in de novo pyrimidine nucleotide biosynthesis. Has preference for UMP and CMP as phosphate acceptors. Also displays broad nucleoside diphosphate kinase activity. This chain is UMP-CMP kinase, found in Homo sapiens (Human).